The primary structure comprises 39 residues: KAKQLETLKAAFAATPKPTRHIREQLAQETGLNMRVIQV.

Residues 1-39 (KAKQLETLKAAFAATPKPTRHIREQLAQETGLNMRVIQV) constitute a DNA-binding region (homeobox).

It is found in the nucleus. The chain is LIM/homeobox protein xLIM-2B (lim2b) from Xenopus laevis (African clawed frog).